A 390-amino-acid polypeptide reads, in one-letter code: LIM/homeobox protein Lhx4 (390 aa).

LIM zinc-binding domains are found at residues 28–87 (PQCA…RFGT) and 88–150 (KCTA…AKQN). Positions 157–216 (AKRPRTTITAKQLETLKNAYKNSPKPARHVREQLSSETGLDMRVVQVWFQNRRAKEKRLK) form a DNA-binding region, homeobox. Positions 161–181 (RTTITAKQLETLKNAYKNSPK) are interaction with DNA. Positions 199 to 211 (RVVQVWFQNRRAK) are interaction with 5-mCpG DNA. Disordered regions lie at residues 230-253 (SVKRSRGSSKQEKESSAEDCGVSD) and 356-390 (AGGPTSDISTGSSVGYPDFPTSPGSWLDEMDHPPF).

The protein localises to the nucleus. Its function is as follows. May play a critical role in the development of respiratory control mechanisms and in the normal growth and maturation of the lung. Binds preferentially to methylated DNA. The protein is LIM/homeobox protein Lhx4 (LHX4) of Homo sapiens (Human).